Consider the following 182-residue polypeptide: uncharacterized protein (182 aa).

The segment covering 1-23 (MILSDQNFLQTQWKEPQTAQSKN) has biased composition (polar residues). Positions 1 to 33 (MILSDQNFLQTQWKEPQTAQSKNTESKCEFHGN) are disordered.

This sequence belongs to the peptidase M24 family.

This is an uncharacterized protein from Caenorhabditis elegans.